A 398-amino-acid chain; its full sequence is Signal-regulatory protein beta-1 isoform 3 (398 aa).

Positions 1–29 are cleaved as a signal peptide; sequence MPVPASWPHLPSPFLLMTLLLGRLTGVAG. Residues 30 to 371 lie on the Extracellular side of the membrane; sequence EEELQVIQPD…GPALASAAPL (342 aa). Residues 31-136 enclose the Ig-like V-type domain; it reads EELQVIQPDK…SPDHVEFKSG (106 aa). Cystine bridges form between C54-C120 and C169-C227. Ig-like C1-type domains lie at 147-246 and 253-347; these read PSAP…ANLS and PTLE…HDLK. Residues N244, N291, and N318 are each glycosylated (N-linked (GlcNAc...) asparagine). Cysteines 272 and 330 form a disulfide. The segment covering 337 to 354 has biased composition (basic and acidic residues); sequence QPAVSKSHDLKVSAHPKE. The disordered stretch occupies residues 337–361; the sequence is QPAVSKSHDLKVSAHPKEQGSNTAP. The helical transmembrane segment at 372–392 threads the bilayer; that stretch reads LIAFLLGPKVLLVVGVSVIYV. Over 393 to 398 the chain is Cytoplasmic; the sequence is YWKQKA.

It localises to the membrane. Its function is as follows. Immunoglobulin-like cell surface receptor involved in the negative regulation of receptor tyrosine kinase-coupled signaling processes. This Homo sapiens (Human) protein is Signal-regulatory protein beta-1 isoform 3 (SIRPB1).